A 266-amino-acid polypeptide reads, in one-letter code: UPF0294 protein YafD (266 aa).

It belongs to the UPF0294 family.

Its subcellular location is the cytoplasm. This is UPF0294 protein YafD from Salmonella agona (strain SL483).